We begin with the raw amino-acid sequence, 201 residues long: Dermatopontin (201 aa).

A signal peptide spans 1 to 18; that stretch reads MDLSLLWVLLPLVTMAWG. At Gln-19 the chain carries Pyrrolidone carboxylic acid. Position 23 is a sulfotyrosine (Tyr-23). 4 repeat units span residues 26-79, 70-75, 80-135, and 125-130. The tract at residues 26 to 186 is 2 X 53-55 AA tandem repeats; it reads PYQQYHDYSD…AVERDRQWKF (161 aa). Cystine bridges form between Cys-50/Cys-77, Cys-90/Cys-132, Cys-106/Cys-133, Cys-139/Cys-196, and Cys-143/Cys-189. The segment at 70–186 is 3 X 6 AA repeats of D-R-[EQ]-W-[NQK]-[FY]; it reads DRQWNYACMP…AVERDRQWKF (117 aa). Sulfotyrosine occurs at positions 162, 164, 166, and 167. A 3-3 repeat occupies 181–186; it reads DRQWKF. Position 194 is a sulfotyrosine (Tyr-194).

Belongs to the dermatopontin family. Interacts with TGFB1, DCN and collagen. Sulfated on tyrosine residue(s). As to expression, expressed in fibroblasts, heart, skeletal muscle, brain and pancreas. Expressed at an intermediate level in lung and kidney, and at a low level in liver and placenta. Expressed at a lower level in fibroblasts from hypertrophic scar lesional skin and in fibroblasts from patients with systemic sclerosis than in normal skin fibroblasts.

The protein resides in the secreted. The protein localises to the extracellular space. It localises to the extracellular matrix. Its function is as follows. Seems to mediate adhesion by cell surface integrin binding. May serve as a communication link between the dermal fibroblast cell surface and its extracellular matrix environment. Enhances TGFB1 activity. Inhibits cell proliferation. Accelerates collagen fibril formation, and stabilizes collagen fibrils against low-temperature dissociation. The chain is Dermatopontin (DPT) from Homo sapiens (Human).